The following is an 862-amino-acid chain: Protein sey1 (862 aa).

The tract at residues 1–21 (MNGHFAAVDNGNGSSPDSNAH) is disordered. The Cytoplasmic portion of the chain corresponds to 1-744 (MNGHFAAVDN…KRSAIGGITQ (744 aa)). Residues 11–21 (GNGSSPDSNAH) are compositionally biased toward polar residues. The GB1/RHD3-type G domain occupies 53-288 (GFNYHLISVF…LTGGVFLPEY (236 aa)). Residue 63–70 (GSQSTGKS) participates in GTP binding. A coiled-coil region spans residues 485 to 506 (FEKELDEVSARLRKEEMRRLAI). A helical membrane pass occupies residues 745–765 (VPLYFYAVLLVLGWNEFVMVL). At 766–768 (RNP) the chain is on the lumenal side. Residues 769-789 (ILFLLLLLISGGTYVAYSLNL) traverse the membrane as a helical segment. At 790-862 (LGPMMQMANA…ETGLGAEDDI (73 aa)) the chain is on the cytoplasmic side. The interval 840-862 (ISMDTLDSNGKRKETGLGAEDDI) is disordered.

This sequence belongs to the TRAFAC class dynamin-like GTPase superfamily. GB1/RHD3 GTPase family. RHD3 subfamily.

It localises to the endoplasmic reticulum membrane. Its function is as follows. Cooperates with the reticulon proteins and tubule-shaping DP1 family proteins to generate and maintain the structure of the tubular endoplasmic reticulum network. Has GTPase activity, which is required for its function in ER organization. This chain is Protein sey1 (sey1), found in Neurospora crassa (strain ATCC 24698 / 74-OR23-1A / CBS 708.71 / DSM 1257 / FGSC 987).